The sequence spans 227 residues: Extracellular small neutral protease (227 aa).

A signal peptide spans 1–29; it reads MRITLPLLSTAVGLGLTAAVLGTGPAATA. Residues 30–42 constitute a propeptide that is removed on maturation; the sequence is AAPQEPVRAAQLG. Ca(2+)-binding residues include Asp156 and Thr158. A Zn(2+)-binding site is contributed by His163. Glu164 is an active-site residue. Positions 167 and 173 each coordinate Zn(2+). A disulfide bridge connects residues Cys179 and Cys192.

The protein belongs to the peptidase M7 family. Requires Ca(2+) as cofactor. The cofactor is Zn(2+). The N-terminus is blocked.

Its subcellular location is the secreted. The catalysed reaction is Hydrolyzes proteins with a preference for Tyr or Phe in the P1' position. Has no action on amino-acid p-nitroanilides.. The polypeptide is Extracellular small neutral protease (snpA) (Streptomyces lividans).